Here is a 236-residue protein sequence, read N- to C-terminus: Purine nucleoside phosphorylase DeoD-type (236 aa).

Position 5 (H5) interacts with a purine D-ribonucleoside. Phosphate-binding positions include G21, R25, R44, and 88-91 (RIGS). A purine D-ribonucleoside contacts are provided by residues 180–182 (EME) and 204–205 (SD). Residue D205 is the Proton donor of the active site.

The protein belongs to the PNP/UDP phosphorylase family. In terms of assembly, homohexamer; trimer of homodimers.

The enzyme catalyses a purine D-ribonucleoside + phosphate = a purine nucleobase + alpha-D-ribose 1-phosphate. It carries out the reaction a purine 2'-deoxy-D-ribonucleoside + phosphate = a purine nucleobase + 2-deoxy-alpha-D-ribose 1-phosphate. Catalyzes the reversible phosphorolytic breakdown of the N-glycosidic bond in the beta-(deoxy)ribonucleoside molecules, with the formation of the corresponding free purine bases and pentose-1-phosphate. The polypeptide is Purine nucleoside phosphorylase DeoD-type (Tolumonas auensis (strain DSM 9187 / NBRC 110442 / TA 4)).